The following is an 862-amino-acid chain: Probable linoleate 9S-lipoxygenase 5 (862 aa).

The PLAT domain maps to 36–161 (NDVNASLLDG…KYKSERIFFA (126 aa)). In terms of domain architecture, Lipoxygenase spans 164–862 (AYLPGETPEP…GKGIPNSVSI (699 aa)). The Fe cation site is built by His523, His528, His714, Asn718, and Ile862.

Belongs to the lipoxygenase family. In terms of assembly, monomer. It depends on Fe cation as a cofactor. Not detected in leaves, stems, flowers, roots, tubers and stolons during normal growth and development.

Its subcellular location is the cytoplasm. It carries out the reaction (9Z,12Z)-octadecadienoate + O2 = (9S)-hydroperoxy-(10E,12Z)-octadecadienoate. Its pathway is lipid metabolism; oxylipin biosynthesis. Plant lipoxygenases may be involved in a number of diverse aspects of plant physiology including growth and development, pest resistance, and senescence or responses to wounding. May contribute to cell death during the hypersensitive response (HR) by the massive production of free fatty acid hydroperoxides. Catalyzes the hydroperoxidation of lipids containing a cis,cis-1,4-pentadiene structure. This Solanum tuberosum (Potato) protein is Probable linoleate 9S-lipoxygenase 5 (LOX1.5).